Consider the following 254-residue polypeptide: Imidazole glycerol phosphate synthase subunit HisF (254 aa).

Active-site residues include Asp13 and Asp132.

The protein belongs to the HisA/HisF family. In terms of assembly, heterodimer of HisH and HisF.

The protein localises to the cytoplasm. It carries out the reaction 5-[(5-phospho-1-deoxy-D-ribulos-1-ylimino)methylamino]-1-(5-phospho-beta-D-ribosyl)imidazole-4-carboxamide + L-glutamine = D-erythro-1-(imidazol-4-yl)glycerol 3-phosphate + 5-amino-1-(5-phospho-beta-D-ribosyl)imidazole-4-carboxamide + L-glutamate + H(+). It participates in amino-acid biosynthesis; L-histidine biosynthesis; L-histidine from 5-phospho-alpha-D-ribose 1-diphosphate: step 5/9. Functionally, IGPS catalyzes the conversion of PRFAR and glutamine to IGP, AICAR and glutamate. The HisF subunit catalyzes the cyclization activity that produces IGP and AICAR from PRFAR using the ammonia provided by the HisH subunit. The protein is Imidazole glycerol phosphate synthase subunit HisF of Wolinella succinogenes (strain ATCC 29543 / DSM 1740 / CCUG 13145 / JCM 31913 / LMG 7466 / NCTC 11488 / FDC 602W) (Vibrio succinogenes).